Here is a 150-residue protein sequence, read N- to C-terminus: FAD synthase (150 aa).

ATP is bound by residues 10 to 11 (VF), 15 to 18 (HPGH), Asp97, and Tyr124.

This sequence belongs to the archaeal FAD synthase family. Homodimer. A divalent metal cation is required as a cofactor.

The enzyme catalyses FMN + ATP + H(+) = FAD + diphosphate. The protein operates within cofactor biosynthesis; FAD biosynthesis; FAD from FMN: step 1/1. Catalyzes the transfer of the AMP portion of ATP to flavin mononucleotide (FMN) to produce flavin adenine dinucleotide (FAD) coenzyme. The chain is FAD synthase from Methanopyrus kandleri (strain AV19 / DSM 6324 / JCM 9639 / NBRC 100938).